Reading from the N-terminus, the 215-residue chain is Adenylate kinase (215 aa).

Residue Gly10–Thr15 coordinates ATP. The NMP stretch occupies residues Ser30–Val60. AMP is bound by residues Thr31, Arg36, Gln58–Val60, Gly86–Arg89, and Gln93. The segment at Gly123–Asp160 is LID. Residues Arg124 and Thr133 to Tyr134 each bind ATP. AMP contacts are provided by Arg157 and Arg168. Lys201 is an ATP binding site.

This sequence belongs to the adenylate kinase family. Monomer.

It is found in the cytoplasm. It catalyses the reaction AMP + ATP = 2 ADP. It participates in purine metabolism; AMP biosynthesis via salvage pathway; AMP from ADP: step 1/1. Its function is as follows. Catalyzes the reversible transfer of the terminal phosphate group between ATP and AMP. Plays an important role in cellular energy homeostasis and in adenine nucleotide metabolism. The protein is Adenylate kinase of Aliivibrio salmonicida (strain LFI1238) (Vibrio salmonicida (strain LFI1238)).